A 94-amino-acid chain; its full sequence is uncharacterized protein (94 aa).

This is an uncharacterized protein from Haemophilus influenzae (strain ATCC 51907 / DSM 11121 / KW20 / Rd).